The chain runs to 385 residues: Homoserine O-succinyltransferase (385 aa).

The 310-residue stretch at 51–360 folds into the AB hydrolase-1 domain; sequence NAVLICHALS…DSPHGHDAFL (310 aa). Ser-157 acts as the Nucleophile in catalysis. Position 227 (Arg-227) interacts with substrate. Catalysis depends on residues Asp-323 and His-356. Position 357 (Asp-357) interacts with substrate.

This sequence belongs to the AB hydrolase superfamily. MetX family. As to quaternary structure, homodimer.

The protein resides in the cytoplasm. It carries out the reaction L-homoserine + succinyl-CoA = O-succinyl-L-homoserine + CoA. Its pathway is amino-acid biosynthesis; L-methionine biosynthesis via de novo pathway; O-succinyl-L-homoserine from L-homoserine: step 1/1. In terms of biological role, transfers a succinyl group from succinyl-CoA to L-homoserine, forming succinyl-L-homoserine. This is Homoserine O-succinyltransferase from Hahella chejuensis (strain KCTC 2396).